We begin with the raw amino-acid sequence, 176 residues long: ATP-dependent protease subunit HslV (176 aa).

Residue T2 is part of the active site. 3 residues coordinate Na(+): G157, C160, and T163.

The protein belongs to the peptidase T1B family. HslV subfamily. In terms of assembly, a double ring-shaped homohexamer of HslV is capped on each side by a ring-shaped HslU homohexamer. The assembly of the HslU/HslV complex is dependent on binding of ATP.

The protein resides in the cytoplasm. The enzyme catalyses ATP-dependent cleavage of peptide bonds with broad specificity.. Its activity is regulated as follows. Allosterically activated by HslU binding. Functionally, protease subunit of a proteasome-like degradation complex believed to be a general protein degrading machinery. The sequence is that of ATP-dependent protease subunit HslV from Enterobacter sp. (strain 638).